Here is a 146-residue protein sequence, read N- to C-terminus: DNA-binding protein Rv2175c (146 aa).

Residues 1 to 27 (MPGRAPGSTLARVGSIPAGDDVLDPDE) are disordered. Thr-9 is subject to Phosphothreonine.

In terms of assembly, monomer in solution. May form homodimers. Interacts with phosphorylated PknL. Post-translationally, phosphorylated by PknL. Phosphorylation negatively regulates DNA-binding activity.

Binds DNA at low salt concentrations. This chain is DNA-binding protein Rv2175c, found in Mycobacterium tuberculosis (strain ATCC 25618 / H37Rv).